Consider the following 756-residue polypeptide: 1-phosphatidylinositol 4,5-bisphosphate phosphodiesterase delta-1 (756 aa).

The PH domain maps to 21–130; the sequence is ALLKGSQLLK…WVQGLRKIIH (110 aa). A substrate binding region spans residues 30-57; that stretch reads KVKSSSWRRERFYKLQEDCKTIWQESRK. 2 consecutive EF-hand domains span residues 140–175 and 176–211; these read KLQH…LNIQ and VDDG…LTQR. Ca(2+) contacts are provided by Asp153, Asn155, Asp157, Lys159, Glu164, Asp189, Ser191, Thr193, Ser195, and Glu200. Ser191 is a glycosylation site (O-linked (GlcNAc) serine). Thr193 is a glycosylation site (O-linked (GlcNAc) threonine). The PI-PLC X-box domain occupies 296–440; it reads QDMDQPLSHY…LKGKILLKGK (145 aa). His311 is a catalytic residue. Positions 312, 341, and 343 each coordinate Ca(2+). Residue His356 is part of the active site. Ca(2+) is bound at residue Glu390. Residues Lys438 and Lys440 each contribute to the substrate site. Thr457 bears the Phosphothreonine mark. Phosphoserine is present on Ser460. One can recognise a PI-PLC Y-box domain in the interval 492 to 609; it reads LSDMIIYCKS…GYVLKPAFLR (118 aa). Substrate-binding residues include Ser522 and Arg549. The C2 domain occupies 609–737; that stretch reads RDPNTTFNSR…QGYRHVHLLS (129 aa). Ile651, Asp653, Asn677, Asp706, Tyr707, and Asp708 together coordinate Ca(2+).

As to quaternary structure, interacts with TGM2. Ca(2+) is required as a cofactor.

It catalyses the reaction a 1,2-diacyl-sn-glycero-3-phospho-(1D-myo-inositol-4,5-bisphosphate) + H2O = 1D-myo-inositol 1,4,5-trisphosphate + a 1,2-diacyl-sn-glycerol + H(+). The enzyme catalyses a 1,2-diacyl-sn-glycero-3-phospho-(1D-myo-inositol) + H2O = 1D-myo-inositol 1-phosphate + a 1,2-diacyl-sn-glycerol + H(+). The production of the second messenger molecules diacylglycerol (DAG) and inositol 1,4,5-trisphosphate (IP3) is mediated by activated phosphatidylinositol-specific phospholipase C enzymes. Essential for trophoblast and placental development. Binds phosphatidylinositol 4,5-bisphosphate. The chain is 1-phosphatidylinositol 4,5-bisphosphate phosphodiesterase delta-1 from Rattus norvegicus (Rat).